The following is a 342-amino-acid chain: Glycerol-1-phosphate dehydrogenase [NAD(P)+] (342 aa).

Residues 84–88 (GRPID) and 106–109 (TAAS) each bind NAD(+). Asp111 provides a ligand contact to substrate. Ser115 provides a ligand contact to NAD(+). Position 160 (Asp160) interacts with substrate. The Zn(2+) site is built by Asp160 and His241. His245 serves as a coordination point for substrate. His260 is a Zn(2+) binding site.

The protein belongs to the glycerol-1-phosphate dehydrogenase family. Homodimer. The cofactor is Zn(2+).

Its subcellular location is the cytoplasm. It catalyses the reaction sn-glycerol 1-phosphate + NAD(+) = dihydroxyacetone phosphate + NADH + H(+). It carries out the reaction sn-glycerol 1-phosphate + NADP(+) = dihydroxyacetone phosphate + NADPH + H(+). It participates in membrane lipid metabolism; glycerophospholipid metabolism. Its function is as follows. Catalyzes the NAD(P)H-dependent reduction of dihydroxyacetonephosphate (DHAP or glycerone phosphate) to glycerol 1-phosphate (G1P). The G1P thus generated is used as the glycerophosphate backbone of phospholipids in the cellular membranes of Archaea. The polypeptide is Glycerol-1-phosphate dehydrogenase [NAD(P)+] (Pyrobaculum aerophilum (strain ATCC 51768 / DSM 7523 / JCM 9630 / CIP 104966 / NBRC 100827 / IM2)).